The sequence spans 234 residues: RNA chaperone ProQ (234 aa).

The segment covering 104–130 (LEEAKARVQAQRDARKREAAENGEKRE) has biased composition (basic and acidic residues). A disordered region spans residues 104-186 (LEEAKARVQA…QRSTPVTSLE (83 aa)). Positions 131-142 (PRRPRPAGKKPT) are enriched in basic residues. Basic and acidic residues-rich tracts occupy residues 143-156 (ARRD…EVRK) and 163-176 (TSER…ETTE). The span at 177 to 186 (QRSTPVTSLE) shows a compositional bias: polar residues.

Belongs to the ProQ family.

It localises to the cytoplasm. Its function is as follows. RNA chaperone with significant RNA binding, RNA strand exchange and RNA duplexing activities. May regulate ProP activity through an RNA-based, post-transcriptional mechanism. This is RNA chaperone ProQ from Edwardsiella ictaluri (strain 93-146).